A 168-amino-acid chain; its full sequence is MNKPKTDYAGYACCVICGLIVGIIFTATLLKVVERKLVHTPSIDKTIKDAYIREDCPTDWISYNNKCIHLSTDRKTWEEGRNTCKALNPNSDLIKIETPNELSFLRSLRRGYWVGESEILNQTTPYNFIAKNATKNGNIFVAQRILPNCIRVTLYNNYTTFLSYHYFG.

Topologically, residues 1–9 (MNKPKTDYA) are cytoplasmic. The helical; Signal-anchor for type II membrane protein transmembrane segment at 10-30 (GYACCVICGLIVGIIFTATLL) threads the bilayer. Over 31–168 (KVVERKLVHT…TTFLSYHYFG (138 aa)) the chain is Extracellular. The C-type lectin domain occupies 63-168 (YNNKCIHLST…TTFLSYHYFG (106 aa)).

It belongs to the poxviridae A40 protein family.

The protein localises to the host membrane. The sequence is that of Protein A40 from Homo sapiens (Human).